The primary structure comprises 349 residues: Thiamine-phosphate synthase (349 aa).

A unknown region spans residues 1 to 125 (MGCESSLDPR…SAEAAAIRYG (125 aa)). Residues 63 to 85 (RARSTVTDPGAGMEHPAQLDRHS) are disordered. The interval 126 to 349 (LYDLEVTCLT…LLSSLSRPTL (224 aa)) is thiamine-phosphate synthase. 4-amino-2-methyl-5-(diphosphooxymethyl)pyrimidine is bound by residues 177–181 (QHRCK) and Asn209. Asp210 and Asp229 together coordinate Mg(2+). 4-amino-2-methyl-5-(diphosphooxymethyl)pyrimidine-binding residues include Ser248 and Lys277. Residue Gly304 participates in 2-[(2R,5Z)-2-carboxy-4-methylthiazol-5(2H)-ylidene]ethyl phosphate binding.

The protein belongs to the thiamine-phosphate synthase family. Mg(2+) serves as cofactor.

It catalyses the reaction 2-[(2R,5Z)-2-carboxy-4-methylthiazol-5(2H)-ylidene]ethyl phosphate + 4-amino-2-methyl-5-(diphosphooxymethyl)pyrimidine + 2 H(+) = thiamine phosphate + CO2 + diphosphate. The catalysed reaction is 2-(2-carboxy-4-methylthiazol-5-yl)ethyl phosphate + 4-amino-2-methyl-5-(diphosphooxymethyl)pyrimidine + 2 H(+) = thiamine phosphate + CO2 + diphosphate. The enzyme catalyses 4-methyl-5-(2-phosphooxyethyl)-thiazole + 4-amino-2-methyl-5-(diphosphooxymethyl)pyrimidine + H(+) = thiamine phosphate + diphosphate. It participates in cofactor biosynthesis; thiamine diphosphate biosynthesis; thiamine phosphate from 4-amino-2-methyl-5-diphosphomethylpyrimidine and 4-methyl-5-(2-phosphoethyl)-thiazole: step 1/1. Condenses 4-methyl-5-(beta-hydroxyethyl)thiazole monophosphate (THZ-P) and 2-methyl-4-amino-5-hydroxymethyl pyrimidine pyrophosphate (HMP-PP) to form thiamine monophosphate (TMP). The protein is Thiamine-phosphate synthase of Parasynechococcus marenigrum (strain WH8102).